Here is a 153-residue protein sequence, read N- to C-terminus: DNA gyrase inhibitor (153 aa).

It belongs to the DNA gyrase inhibitor family. Interacts with DNA gyrase.

Its subcellular location is the cytoplasm. Inhibits the supercoiling activity of DNA gyrase. Acts by inhibiting DNA gyrase at an early step, prior to (or at the step of) binding of DNA by the gyrase. It protects cells against toxins that target DNA gyrase, by inhibiting activity of these toxins and reducing the formation of lethal double-strand breaks in the cell. This chain is DNA gyrase inhibitor, found in Pantoea sp. (strain At-9b).